We begin with the raw amino-acid sequence, 424 residues long: MSDDQPGPRTEYKLETDSELRFEMENGNDKVTVTLLNGHAELYGTELVMKKPYEFGVGAKVAIFTYHGCTIELRGKPDVAYVARETPMVQYLNCNSALEHLRTKAEEDDVRGPVAMVVGPMDVGKSTLCRIFLNYAVRLGRRPIYVDLDVGQGGIAIPGTIGALLVERPAPVAEGFSQQAPLVYHFGHTNPSENDVFYDALITKLAETTLERLQANKRAKHSGMIINTCGWVKQGGYHHILHAAKEFEVNAIFVLDQERLYNELLRDVASKTVQVVYLPKSGGVVKRTRSQRAEARDNRIREYFYGSKMPLYPHSFDVKFSDVKIFKVGSPALPDSCLPLGMKKEDNFTKLVAVQPSMQLLHHILAVSFAESIEENVIQSNVAGFICVTDVNMEKEVLTILSPQPRPLPQTILLVSDLQFMDSH.

ATP is bound by residues Glu-19, Lys-60, and 122–127 (DVGKST).

This sequence belongs to the Clp1 family. Clp1 subfamily.

It localises to the nucleus. In terms of biological role, required for endonucleolytic cleavage during polyadenylation-dependent pre-mRNA 3'-end formation. This is Protein CLP1 homolog (cbc) from Aedes aegypti (Yellowfever mosquito).